The chain runs to 362 residues: GDSL esterase/lipase At5g22810 (362 aa).

A signal peptide spans 1 to 28 (MGFSGIWLNLYVVFGSLMVFERMVVMVV). Residue Ser-44 is the Nucleophile of the active site. N-linked (GlcNAc...) asparagine glycans are attached at residues Asn-159, Asn-162, Asn-264, and Asn-329. Catalysis depends on residues Asp-337 and His-340.

It belongs to the 'GDSL' lipolytic enzyme family.

It localises to the secreted. The polypeptide is GDSL esterase/lipase At5g22810 (Arabidopsis thaliana (Mouse-ear cress)).